The sequence spans 301 residues: Protoheme IX farnesyltransferase (301 aa).

Transmembrane regions (helical) follow at residues 20-42 (FTEL…GMWL), 55-75 (VDVI…SGAF), 105-125 (ALMV…MTTW), 126-146 (QAGV…SLYA), 150-172 (LVSN…WFAV), 176-198 (FSIV…FYAI), 227-247 (MFFW…LGIV), 249-269 (VILA…GFKM), and 280-300 (FVYS…ISIF).

Belongs to the UbiA prenyltransferase family. Protoheme IX farnesyltransferase subfamily. As to quaternary structure, interacts with CtaA.

The protein localises to the cell membrane. The catalysed reaction is heme b + (2E,6E)-farnesyl diphosphate + H2O = Fe(II)-heme o + diphosphate. The protein operates within porphyrin-containing compound metabolism; heme O biosynthesis; heme O from protoheme: step 1/1. Its function is as follows. Converts heme B (protoheme IX) to heme O by substitution of the vinyl group on carbon 2 of heme B porphyrin ring with a hydroxyethyl farnesyl side group. The polypeptide is Protoheme IX farnesyltransferase (Listeria monocytogenes serovar 1/2a (strain ATCC BAA-679 / EGD-e)).